A 525-amino-acid chain; its full sequence is Zinc finger protein 678 (525 aa).

14 C2H2-type zinc fingers span residues 97–119 (FQCI…KRIH), 125–147 (YKCE…KRIH), 153–175 (YKCD…KKIH), 181–203 (YKCD…KKIH), 209–231 (YPCE…KRIH), 237–259 (YKCK…KRIH), 265–287 (YKCE…RRIH), 293–315 (YKCE…KRIH), 321–343 (YQCE…KRIH), 349–371 (YKCE…KRIH), 377–399 (YKCK…RRIH), 405–427 (YKCE…KRIH), 433–455 (YKCK…KRIH), and 461–483 (YKCE…KRIH). The segment at 489–511 (YKCKECGKGFYQSSIHSKYKRIY) adopts a C2H2-type 15; degenerate zinc-finger fold.

It belongs to the krueppel C2H2-type zinc-finger protein family.

Its subcellular location is the nucleus. Functionally, may be involved in transcriptional regulation. The protein is Zinc finger protein 678 (ZNF678) of Homo sapiens (Human).